The following is a 418-amino-acid chain: Zinc metalloproteinase-disintegrin-like batroxstatin-2 (418 aa).

Positions 10 to 206 constitute a Peptidase M12B domain; the sequence is KYVKLVLVAD…DMPQCILEKP (197 aa). Cystine bridges form between cysteine 121-cysteine 201, cysteine 161-cysteine 185, and cysteine 163-cysteine 168. Histidine 146 serves as a coordination point for Zn(2+). The active site involves glutamate 147. Zn(2+) is bound by residues histidine 150 and histidine 156. Residues 214 to 299 enclose the Disintegrin domain; that stretch reads PPVCGNYFVE…AECTDRFQRN (86 aa). Ca(2+) is bound by residues valine 216, asparagine 219, phenylalanine 221, glutamate 223, glutamate 226, and aspartate 229. Disulfide bonds link cysteine 217/cysteine 246, cysteine 228/cysteine 241, cysteine 230/cysteine 236, cysteine 240/cysteine 263, cysteine 254/cysteine 260, cysteine 259/cysteine 285, cysteine 272/cysteine 292, cysteine 279/cysteine 310, cysteine 303/cysteine 315, cysteine 322/cysteine 372, cysteine 337/cysteine 383, cysteine 350/cysteine 360, cysteine 367/cysteine 409, and cysteine 403/cysteine 414. A D/ECD-tripeptide motif is present at residues 278 to 280; that stretch reads ECD. The Ca(2+) site is built by aspartate 280, methionine 281, aspartate 283, aspartate 294, and arginine 295. N-linked (GlcNAc...) asparagine glycosylation occurs at asparagine 312.

It belongs to the venom metalloproteinase (M12B) family. P-III subfamily. P-IIIc sub-subfamily. In terms of assembly, homodimer; disulfide-linked. Requires Zn(2+) as cofactor. As to expression, expressed by the venom gland.

It localises to the secreted. Its function is as follows. Snake venom zinc metalloprotease that induces apoptosis in vascular endothelial cells (VEC), without degrading the extracellular matrix (it cannot cleave collagen) or inhibiting adhesion of VEC. Has also fibrinogenolytic and hemorrhagic activities. The sequence is that of Zinc metalloproteinase-disintegrin-like batroxstatin-2 from Bothrops atrox (Barba amarilla).